The chain runs to 404 residues: Tryptophan synthase beta chain (404 aa).

At Lys-94 the chain carries N6-(pyridoxal phosphate)lysine.

Belongs to the TrpB family. Tetramer of two alpha and two beta chains. Requires pyridoxal 5'-phosphate as cofactor.

The enzyme catalyses (1S,2R)-1-C-(indol-3-yl)glycerol 3-phosphate + L-serine = D-glyceraldehyde 3-phosphate + L-tryptophan + H2O. The protein operates within amino-acid biosynthesis; L-tryptophan biosynthesis; L-tryptophan from chorismate: step 5/5. Its function is as follows. The beta subunit is responsible for the synthesis of L-tryptophan from indole and L-serine. The polypeptide is Tryptophan synthase beta chain (Staphylococcus aureus (strain USA300)).